We begin with the raw amino-acid sequence, 450 residues long: Adenosylhomocysteinase (450 aa).

The substrate site is built by Thr59, Asp135, and Glu160. 161–163 (TTT) contacts NAD(+). Substrate is bound by residues Lys190 and Asp194. Residues Asn195, 224–229 (GFGDVG), Glu247, 303–305 (IGH), and Asn350 each bind NAD(+).

The protein belongs to the adenosylhomocysteinase family. It depends on NAD(+) as a cofactor.

It is found in the cytoplasm. It catalyses the reaction S-adenosyl-L-homocysteine + H2O = L-homocysteine + adenosine. Its pathway is amino-acid biosynthesis; L-homocysteine biosynthesis; L-homocysteine from S-adenosyl-L-homocysteine: step 1/1. Adenosylhomocysteine is a competitive inhibitor of S-adenosyl-L-methionine-dependent methyl transferase reactions; therefore adenosylhomocysteinase may play a key role in the control of methylations via regulation of the intracellular concentration of adenosylhomocysteine. The sequence is that of Adenosylhomocysteinase (SAH1) from Candida albicans (strain SC5314 / ATCC MYA-2876) (Yeast).